The following is a 127-amino-acid chain: Large ribosomal subunit protein bL17 (127 aa).

This sequence belongs to the bacterial ribosomal protein bL17 family. In terms of assembly, part of the 50S ribosomal subunit. Contacts protein L32.

The polypeptide is Large ribosomal subunit protein bL17 (Legionella pneumophila (strain Corby)).